The following is a 427-amino-acid chain: 3-phosphoshikimate 1-carboxyvinyltransferase (427 aa).

3-phosphoshikimate contacts are provided by Lys-22, Ser-23, and Arg-27. Lys-22 provides a ligand contact to phosphoenolpyruvate. Positions 96 and 124 each coordinate phosphoenolpyruvate. 7 residues coordinate 3-phosphoshikimate: Ser-169, Ser-170, Gln-171, Ser-197, Asp-313, Asn-336, and Lys-340. Gln-171 serves as a coordination point for phosphoenolpyruvate. Asp-313 (proton acceptor) is an active-site residue. 3 residues coordinate phosphoenolpyruvate: Arg-344, Arg-386, and Lys-411.

It belongs to the EPSP synthase family. In terms of assembly, monomer.

Its subcellular location is the cytoplasm. It carries out the reaction 3-phosphoshikimate + phosphoenolpyruvate = 5-O-(1-carboxyvinyl)-3-phosphoshikimate + phosphate. It functions in the pathway metabolic intermediate biosynthesis; chorismate biosynthesis; chorismate from D-erythrose 4-phosphate and phosphoenolpyruvate: step 6/7. Its function is as follows. Catalyzes the transfer of the enolpyruvyl moiety of phosphoenolpyruvate (PEP) to the 5-hydroxyl of shikimate-3-phosphate (S3P) to produce enolpyruvyl shikimate-3-phosphate and inorganic phosphate. The polypeptide is 3-phosphoshikimate 1-carboxyvinyltransferase (Salmonella schwarzengrund (strain CVM19633)).